A 409-amino-acid polypeptide reads, in one-letter code: MRSDDLYITTVPCFFKCPISLDVMKSPVSLSTGVTYDRVSIQRWLDDGNNTCPATMQILQNKEFVPNLTLHRLIDHWSDSINRRADSESPESDTPTRDEINAAIERFRIENDARSKILRFARESDENREFLAGKDDFVAMLVDLISDSRNFSDSQLLLVGEAVKILSMIRRKIFDRRRLSNLILTNGGDCLTSFFLLIKRGNPKLKIDCSAVLEFIAVDAESKLIIAKGEGLVTEIIKLISSDSDSSLIEANLSLLIAIASSKRVKLALIREKLVTKLTSLLTDPTTSVSVTEKCLKLLEAISSCKEGRSEICDGVCVETVVNKLMKVSTAATEHAVTVLWSVCYLFKEKKAQDAVIRINGVTKILLLLQSNCSLTVRHMLTDLLKVFKVNSRSCLSVYETKTTHIMPF.

The U-box domain maps to 10–84 (TVPCFFKCPI…DHWSDSINRR (75 aa)). ARM repeat units lie at residues 178–218 (RLSN…FIAV), 219–261 (DAES…AIAS), and 263–304 (KRVK…AISS).

It carries out the reaction S-ubiquitinyl-[E2 ubiquitin-conjugating enzyme]-L-cysteine + [acceptor protein]-L-lysine = [E2 ubiquitin-conjugating enzyme]-L-cysteine + N(6)-ubiquitinyl-[acceptor protein]-L-lysine.. The protein operates within protein modification; protein ubiquitination. Its function is as follows. Functions as an E3 ubiquitin ligase. The protein is U-box domain-containing protein 28 (PUB28) of Arabidopsis thaliana (Mouse-ear cress).